The following is a 436-amino-acid chain: MVEMLPTVAVLVLAVSVVAKDNTTCDGPCGLRFRQNSQAGTRIVSGQSAQLGAWPWMVSLQIFTSHNSRRYHACGGSLLNSHWVLTAAHCFDNKKKVYDWRLVFGAQEIEYGRNKPVKEPQQERYVQKIVIHEKYNVVTEGNDIALLKITPPVTCGNFIGPCCLPHFKAGPPQIPHTCYVTGWGYIKEKAPRPSPVLMEARVDLIDLDLCNSTQWYNGRVTSTNVCAGYPEGKIDTCQGDSGGPLMCRDNVDSPFVVVGITSWGVGCARAKRPGVYTATWDYLDWIASKIGPNALHLIQPATPHPPTTRHPMVSFHPPSLRPPWYFQHLPSRPLYLRPLRPLLHRPSSTQTSSSLMPLLSPPTPAQPASFTIATQHMRHRTTLSFARRLQRLIEALKMRTYPMKHPSQYSGPRNYHYRFSTFEPLSNKPSEPFLHS.

An N-terminal signal peptide occupies residues 1–19 (MVEMLPTVAVLVLAVSVVA). Asn22 carries N-linked (GlcNAc...) asparagine glycosylation. 6 disulfide bridges follow: Cys25/Cys155, Cys29/Cys163, Cys74/Cys90, Cys178/Cys247, Cys210/Cys226, and Cys237/Cys267. A Peptidase S1 domain is found at 43-291 (IVSGQSAQLG…YLDWIASKIG (249 aa)). Residues His89 and Asp143 each act as charge relay system in the active site. Asn211 carries N-linked (GlcNAc...) asparagine glycosylation. Residue Ser241 is the Charge relay system of the active site. The propeptide at 346-436 (PSSTQTSSSL…NKPSEPFLHS (91 aa)) is pro-rich.

The protein belongs to the peptidase S1 family. Heavy chain (catalytic) and a light chain linked by two disulfide bonds. Forms a heterodimer with SERPINA5.

It catalyses the reaction Preferential cleavage: Arg-|-Xaa, Lys-|-Xaa.. Inhibited by SERPINA5. In terms of biological role, acrosin is the major protease of mammalian spermatozoa. It is a serine protease of trypsin-like cleavage specificity, it is synthesized in a zymogen form, proacrosin and stored in the acrosome. This chain is Acrosin (Acr), found in Mus musculus (Mouse).